A 539-amino-acid chain; its full sequence is MAKELKFSEDARAKMKAGVDKLADTVKTTIGPKGRNVVLEQSYGAPTITNDGVTIAKAIELEDHFENMGAKLVAEVASKTNDIAGDGTTTATVLTQAIVGEGLKNVTAGANPVGIRTGIEKATAAAVAKLHEMSHTVNTKDEIAQIASISAANEEVGELIAEAMDKVGNDGVITIEESKGIETTLDVVEGMQFDRGYMSQYMVTDNDKMEANLDNPYILITDKKIGNIQDILPVLQSVVEQGRALLIIADDITGEALPTLVLNKMRGTFNVVAVKAPGFGDRRKAQLEDIAILTGGTVITEDLGLNLKDVTIDQLGQASKINITKDNTTIVEGSGDKGAVASRVDTIKQQIAETTSDFDREKLQERLAKLAGGVAVINVGAATETELKERKYRIEDALNATRAAVEEGFVAGGGTALVNVIAAVSALSEEGDVQTGINTVIKALESPVRQIAENAGLEGSVIVNKLKEQKEGFGYNAATDEWVDMIAAGIVDPTKVTRSALQNAASVSALLLTTEAVVAEEPKDDAPAAMPQGGMPGMM.

ATP is bound by residues 29 to 32 (TIGP), 86 to 90 (DGTTT), G413, 476 to 478 (NAA), and D492.

The protein belongs to the chaperonin (HSP60) family. Forms a cylinder of 14 subunits composed of two heptameric rings stacked back-to-back. Interacts with the co-chaperonin GroES.

It localises to the cytoplasm. It catalyses the reaction ATP + H2O + a folded polypeptide = ADP + phosphate + an unfolded polypeptide.. Its function is as follows. Together with its co-chaperonin GroES, plays an essential role in assisting protein folding. The GroEL-GroES system forms a nano-cage that allows encapsulation of the non-native substrate proteins and provides a physical environment optimized to promote and accelerate protein folding. In Leuconostoc mesenteroides subsp. mesenteroides (strain ATCC 8293 / DSM 20343 / BCRC 11652 / CCM 1803 / JCM 6124 / NCDO 523 / NBRC 100496 / NCIMB 8023 / NCTC 12954 / NRRL B-1118 / 37Y), this protein is Chaperonin GroEL.